The chain runs to 249 residues: Proteasome subunit alpha (249 aa).

The protein belongs to the peptidase T1A family. The 20S proteasome core is composed of 14 alpha and 14 beta subunits that assemble into four stacked heptameric rings, resulting in a barrel-shaped structure. The two inner rings, each composed of seven catalytic beta subunits, are sandwiched by two outer rings, each composed of seven alpha subunits. The catalytic chamber with the active sites is on the inside of the barrel. Has a gated structure, the ends of the cylinder being occluded by the N-termini of the alpha-subunits. Is capped at one or both ends by the proteasome regulatory ATPase, PAN.

Its subcellular location is the cytoplasm. The formation of the proteasomal ATPase PAN-20S proteasome complex, via the docking of the C-termini of PAN into the intersubunit pockets in the alpha-rings, triggers opening of the gate for substrate entry. Interconversion between the open-gate and close-gate conformations leads to a dynamic regulation of the 20S proteasome proteolysis activity. Functionally, component of the proteasome core, a large protease complex with broad specificity involved in protein degradation. This is Proteasome subunit alpha from Methanosarcina mazei (strain ATCC BAA-159 / DSM 3647 / Goe1 / Go1 / JCM 11833 / OCM 88) (Methanosarcina frisia).